We begin with the raw amino-acid sequence, 62 residues long: Paralithocin 1 (62 aa).

Residues 1-23 (MGPMKVLLVLLVVMVAAPHIADA) form the signal peptide. 4 disulfide bridges follow: Cys-29-Cys-55, Cys-33-Cys-51, Cys-37-Cys-49, and Cys-42-Cys-52. Tyr-61 is modified (tyrosine amide; partial).

It belongs to the paralithocin family. The amidated form is probably the active form.

Has weak antibacterial activity, mainly against marine Gram-positive bacteria like C.maltaromaticum (MIC=200 uM), C.mobile (MIC=100 uM), C.divergens (MIC=200 uM) and C.funditum (MIC=200 uM) but also against C.glutamicum (MIC=50 uM). Has very little or no activity against Gram-negative bacteria. This chain is Paralithocin 1, found in Paralithodes camtschaticus (Red king crab).